A 1746-amino-acid chain; its full sequence is MGVVTRLLVGTFLASLALPAQGGVLKKVIRHKRQTGVNVTLPEESQPVVFNHVYNIKLPVGSQCSVDLESASGDKDLAAPSEPSESVQEHTVDGENQIVFTHRINIPRRACGCAAAPDVKELLSRLEELENLVSSLREQCTSGAGCCLQPAEGRLDTRPFCSGRGNFSTEGCGCVCEPGWKGPNCSEPECPSNCHLRGQCVDGQCVCNEGFTGEDCSQLACPSDCNDQGKCVNGVCVCFEGYSGVDCSRETCPVPCSEEHGRCVDGRCVCQEGFAGEDCNEPLCLHNCHGRGRCVENECVCDEGFTGEDCGELICPKDCFDRGRCINGTCYCDEGFEGEDCGRLACPHGCRGRGRCEEGQCVCDEGFAGADCSERRCPSDCHNRGRCLDGRCECDDGFEGEDCGELRCPGGCSGHGRCVNGQCVCDEGRTGEDCSQLRCPNDCHGRGRCVQGRCECEHGFQGYDCSEMSCPHDCHQHGRCVNGMCVCDDGYTGEDCRELRCPGDCSQRGRCVDGRCVCEHGFAGPDCADLACPSDCHGRGRCVNGQCVCHEGFTGKDCGQRRCPGDCHGQGRCVDGQCVCHEGFTGLDCGQRSCPNDCSNWGQCVSGRCICNEGYSGEDCSQVSPPKDLIVTEVTEETVNLAWDNEMRVTEYLIVYTPTHEDGLEMQFRVPGDQTSTTIRELEPGVEYFIRVFAILENKKSIPVSARVATYLPTPEGLKFKSIKETSVEVEWDPLDIAFETWEIIFRNMNKEDEGEITKSLRRPETTYRQTGLAPGQEYEISLHIVKNNTRGPGLKRVTTTRLDAPSQIEAKDVTDTTALITWFKPLAEIDGIELTYGIKDVPGDRTTIDLTHEENQYSIGNLKPDTEYEVSLISRRADMSSNPAKETFTTGLDAPRNLRRISQTDNSITLEWRNGKAAADTYRIKYAPISGGDHAEVEVPRSPQTTTKATLTGLRPGTEYGIGVSAVKGDKESDPATINAATDLDPPKDFRVSELKESSLTLLWRTPLAKFDRYRLNYGLPSGQPVEVQLPRNATSYILRGLEPGQEYTILLTAEKGRHKSKPARVKASTAGEPEIGNLSVSDITPESFSLSWTATEGAFETFTIEIIDSNRFLETMEYNISGAERTAHISGLRPGNDFIVYLSGLAPGIQTKPISATATTEAEPEVDNLLVSDATPDGFRLSWTADEGVFDSFVLKIRDTKKQSEPLEITLLASERTRDITGLREATEYEIELYGISSGKRSQPVSAIATTAMGSPKEITFSDITENSATVSWMVPTAQVESFRITYVPITGGAPSVVTVDGTKTQTRLLRLLPGVEYLVSVIAVKGFEESEPVSGTLTTALDGPSGLVTANITDSEALAMWQPAIAPVDHYVISYTGDRVPEITRTVSGNTVEYALTNLEPATEYTLRIFAEKGPQKSSTITTKFTTDLDSPRDLTATEVQSETALLTWRPPRASVTGYLLVYESVDGTLKEVVVGPETTSYSLSGLSPSTHYTARIQALNGPLRSKMSQTVFTTIGLLYPFPRDCSQAMLNGDTTSGLYTIYVNNDKAQKLEVFCDMTSDSGGWIVFLRRKNGREDFYRNWKAYAAGFGDLKEEFWLGLDALSKITAQGQYELRVDLRDHGETAYAVYDRFSVGDARTRYKLKVEGYSGTAGDSMAYHNGRSFSTFDKDTDSAITNCALSYKGAFWYKNCHRVNLMGRYGDNSHSQGVNWFHWKGHEYSIQFAEMKLRPSNFRNLEGRRKRA.

The signal sequence occupies residues 1 to 22; the sequence is MGVVTRLLVGTFLASLALPAQG. Residues 23–185 are involved in hexamer formation; sequence GVLKKVIRHK…CEPGWKGPNC (163 aa). Residue Asn-38 is glycosylated (N-linked (GlcNAc...) asparagine). Phosphoserine occurs at positions 65, 70, and 72. The O-linked (Xyl...) (chondroitin sulfate) serine glycan is linked to Ser-72. A coiled-coil region spans residues 118–145; the sequence is DVKELLSRLEELENLVSSLREQCTSGAG. Residues Asn-166 and Asn-184 are each glycosylated (N-linked (GlcNAc...) asparagine). An EGF-like 1; incomplete domain is found at 174–186; the sequence is CVCEPGWKGPNCS. EGF-like domains lie at 187–217, 218–249, 250–280, 281–311, 312–342, 343–373, 374–404, 405–435, 436–466, 467–497, 498–528, 529–559, 560–589, and 590–620; these read EPEC…EDCS, QLAC…DCSR, ETCP…EDCN, EPLC…EDCG, ELIC…EDCG, RLAC…ADCS, ERRC…EDCG, ELRC…EDCS, QLRC…YDCS, EMSC…EDCR, ELRC…PDCA, DLAC…KDCG, QRRC…GLDC, and GQRS…GEDC. Intrachain disulfides connect Cys-190-Cys-200, Cys-194-Cys-205, Cys-207-Cys-216, Cys-221-Cys-231, Cys-225-Cys-236, Cys-238-Cys-247, Cys-252-Cys-263, Cys-256-Cys-268, Cys-270-Cys-279, Cys-284-Cys-294, Cys-288-Cys-299, Cys-301-Cys-310, Cys-315-Cys-325, Cys-319-Cys-330, Cys-332-Cys-341, Cys-346-Cys-356, Cys-350-Cys-361, Cys-363-Cys-372, Cys-377-Cys-387, Cys-381-Cys-392, Cys-394-Cys-403, Cys-408-Cys-418, Cys-412-Cys-423, Cys-425-Cys-434, Cys-439-Cys-449, Cys-443-Cys-454, Cys-456-Cys-465, Cys-470-Cys-480, Cys-474-Cys-485, Cys-487-Cys-496, Cys-501-Cys-511, Cys-505-Cys-516, Cys-518-Cys-527, Cys-532-Cys-542, Cys-536-Cys-547, Cys-549-Cys-558, Cys-563-Cys-573, Cys-567-Cys-578, Cys-580-Cys-589, Cys-594-Cys-604, Cys-598-Cys-609, and Cys-611-Cys-620. The N-linked (GlcNAc...) asparagine glycan is linked to Asn-327. Fibronectin type-III domains follow at residues 625–717, 718–801, 805–894, 895–988, 989–1075, 1076–1166, 1167–1256, 1257–1346, 1347–1433, and 1434–1522; these read PPKD…TPEG, LKFK…VTTT, APSQ…TGLD, APRN…LDPP, KDFR…AGEP, EIGN…EAEP, EVDN…TAMG, SPKE…ALDG, PSGL…TDLD, and SPRD…IGLL. Asn-788 carries an N-linked (GlcNAc...) asparagine glycan. A Phosphothreonine modification is found at Thr-905. N-linked (GlcNAc...) asparagine glycosylation is found at Asn-1034, Asn-1079, and Asn-1121. An N-linked (GlcNAc...) asparagine glycan is attached at Asn-1354. The region spanning 1520-1735 is the Fibrinogen C-terminal domain; the sequence is GLLYPFPRDC…FAEMKLRPSN (216 aa).

This sequence belongs to the tenascin family. As to quaternary structure, homohexamer; disulfide-linked. A homotrimer may be formed in the triple coiled-coil region and may be stabilized by disulfide rings at both ends. Two of such half-hexabrachions may be disulfide linked within the central globule. Interacts with CSPG4. Interacts (via the 3rd fibronectin type-III domain) with integrin ITGA9:ITGB1. As to expression, submaxillary glands and brain.

Its subcellular location is the secreted. It localises to the extracellular space. The protein localises to the extracellular matrix. Its function is as follows. Extracellular matrix protein implicated in guidance of migrating neurons as well as axons during development, synaptic plasticity as well as neuronal regeneration. Promotes neurite outgrowth from cortical neurons grown on a monolayer of astrocytes. Ligand for integrins alpha-8/beta-1, alpha-9/beta-1, alpha-V/beta-3 and alpha-V/beta-6. In tumors, stimulates angiogenesis by elongation, migration and sprouting of endothelial cells. This Sus scrofa (Pig) protein is Tenascin (TNC).